The chain runs to 701 residues: C6 finger domain transcription factor nscR (701 aa).

A DNA-binding region (zn(2)-C6 fungal-type) is located at residues 17 to 43 (CELCRERKVKCDKLDPCTNCSSAGVIC).

The protein resides in the nucleus. In terms of biological role, transcription factor that specifically regulates the neosartoricin B biosynthesis gene cluster. This is C6 finger domain transcription factor nscR from Arthroderma benhamiae (strain ATCC MYA-4681 / CBS 112371) (Trichophyton mentagrophytes).